The following is a 285-amino-acid chain: 1,4-dihydroxy-2-naphthoyl-CoA synthase (285 aa).

Substrate is bound by residues R45, 84–88 (AGGDQ), Y97, 129–133 (YSIGG), T155, S161, Y258, and K273. 154-156 (QTG) lines the hydrogencarbonate pocket.

It belongs to the enoyl-CoA hydratase/isomerase family. MenB subfamily. As to quaternary structure, homohexamer. Hydrogencarbonate serves as cofactor.

The enzyme catalyses 2-succinylbenzoyl-CoA + H(+) = 1,4-dihydroxy-2-naphthoyl-CoA + H2O. It functions in the pathway quinol/quinone metabolism; 1,4-dihydroxy-2-naphthoate biosynthesis; 1,4-dihydroxy-2-naphthoate from chorismate: step 6/7. Its pathway is quinol/quinone metabolism; menaquinone biosynthesis. Its function is as follows. Converts o-succinylbenzoyl-CoA (OSB-CoA) to 1,4-dihydroxy-2-naphthoyl-CoA (DHNA-CoA). This Salmonella typhimurium (strain LT2 / SGSC1412 / ATCC 700720) protein is 1,4-dihydroxy-2-naphthoyl-CoA synthase.